The primary structure comprises 150 residues: MEKANASTSAKTIDQLCKECNLCMHSLQILCVFCRKTLSTAEVYAFQYKDLNIVWQGNFPFAACACCLEIQGKVNQYRHFDFAAYAVTVEEEINKSIFDVRIRCYLCHKPLCDVEKLRHILEKARFIKLNCEWKGRCFHCWTSCMENILP.

Zinc fingers lie at residues 31-67 and 104-140; these read CVFCRKTLSTAEVYAFQYKDLNIVWQGNFPFAACACC and CYLCHKPLCDVEKLRHILEKARFIKLNCEWKGRCFHC.

This sequence belongs to the papillomaviridae E6 protein family. As to quaternary structure, forms homodimers. Interacts with ubiquitin-protein ligase UBE3A/E6-AP; this interaction stimulates UBE3A ubiquitin activity. Interacts with host TP53 and EP300; this interaction inhibits TP53 activity.

The protein resides in the host cytoplasm. It localises to the host nucleus. Functionally, plays a major role in the induction and maintenance of cellular transformation. E6 associates with host UBE3A/E6-AP ubiquitin-protein ligase and modulates its activity. Sequesters tumor suppressor TP53 in the host cytoplasm and modulates its activity by interacting with host EP300 that results in the reduction of TP53 acetylation and activation. In turn, apoptosis induced by DNA damage is inhibited. E6 also protects host keratinocytes from apoptosis by mediating the degradation of host BAK1. May also inhibit host immune response. This chain is Protein E6, found in Pygmy chimpanzee papillomavirus type 1 (PCPV-1).